Reading from the N-terminus, the 637-residue chain is tRNA uridine 5-carboxymethylaminomethyl modification enzyme MnmG (637 aa).

Residues 15–20, Ile-127, and Ser-182 each bind FAD; that span reads GAGHAG. 276-290 is an NAD(+) binding site; that stretch reads GPRYCPSIEDKIVRF. Gln-373 serves as a coordination point for FAD.

Belongs to the MnmG family. In terms of assembly, homodimer. Heterotetramer of two MnmE and two MnmG subunits. Requires FAD as cofactor.

Its subcellular location is the cytoplasm. Functionally, NAD-binding protein involved in the addition of a carboxymethylaminomethyl (cmnm) group at the wobble position (U34) of certain tRNAs, forming tRNA-cmnm(5)s(2)U34. This chain is tRNA uridine 5-carboxymethylaminomethyl modification enzyme MnmG, found in Streptococcus pneumoniae (strain Hungary19A-6).